A 149-amino-acid polypeptide reads, in one-letter code: 3-dehydroquinate dehydratase (149 aa).

The Proton acceptor role is filled by Y26. Residues N77, H83, and D90 each contribute to the substrate site. H103 acts as the Proton donor in catalysis. Substrate-binding positions include 104–105 and R114; that span reads LS.

Belongs to the type-II 3-dehydroquinase family. In terms of assembly, homododecamer.

The catalysed reaction is 3-dehydroquinate = 3-dehydroshikimate + H2O. Its pathway is metabolic intermediate biosynthesis; chorismate biosynthesis; chorismate from D-erythrose 4-phosphate and phosphoenolpyruvate: step 3/7. In terms of biological role, catalyzes a trans-dehydration via an enolate intermediate. This Aliivibrio salmonicida (strain LFI1238) (Vibrio salmonicida (strain LFI1238)) protein is 3-dehydroquinate dehydratase.